The chain runs to 253 residues: Exosome complex component Rrp4 (253 aa).

The region spanning 80 to 153 (GDIVIGIVVD…SRGPILTVQD (74 aa)) is the S1 motif domain.

Belongs to the RRP4 family. In terms of assembly, component of the archaeal exosome complex. Forms a trimer of Rrp4 and/or Csl4 subunits. The trimer associates with a hexameric ring-like arrangement composed of 3 Rrp41-Rrp42 heterodimers.

The protein resides in the cytoplasm. Its function is as follows. Non-catalytic component of the exosome, which is a complex involved in RNA degradation. Increases the RNA binding and the efficiency of RNA degradation. Confers strong poly(A) specificity to the exosome. The protein is Exosome complex component Rrp4 of Ignisphaera aggregans (strain DSM 17230 / JCM 13409 / AQ1.S1).